Here is a 161-residue protein sequence, read N- to C-terminus: Small ribosomal subunit protein uS9 (161 aa).

It belongs to the universal ribosomal protein uS9 family.

The protein is Small ribosomal subunit protein uS9 of Rickettsia canadensis (strain McKiel).